The sequence spans 214 residues: Pyrophosphatase PpaX (214 aa).

D9 acts as the Nucleophile in catalysis.

The protein belongs to the HAD-like hydrolase superfamily. PpaX family. It depends on Mg(2+) as a cofactor.

It carries out the reaction diphosphate + H2O = 2 phosphate + H(+). Its function is as follows. Hydrolyzes pyrophosphate formed during P-Ser-HPr dephosphorylation by HPrK/P. Might play a role in controlling the intracellular pyrophosphate pool. The sequence is that of Pyrophosphatase PpaX from Oceanobacillus iheyensis (strain DSM 14371 / CIP 107618 / JCM 11309 / KCTC 3954 / HTE831).